The sequence spans 364 residues: Aminomethyltransferase (364 aa).

This sequence belongs to the GcvT family. The glycine cleavage system is composed of four proteins: P, T, L and H.

The enzyme catalyses N(6)-[(R)-S(8)-aminomethyldihydrolipoyl]-L-lysyl-[protein] + (6S)-5,6,7,8-tetrahydrofolate = N(6)-[(R)-dihydrolipoyl]-L-lysyl-[protein] + (6R)-5,10-methylene-5,6,7,8-tetrahydrofolate + NH4(+). The glycine cleavage system catalyzes the degradation of glycine. The polypeptide is Aminomethyltransferase (Citrobacter koseri (strain ATCC BAA-895 / CDC 4225-83 / SGSC4696)).